Reading from the N-terminus, the 416-residue chain is tRNA(Met) cytidine acetate ligase (416 aa).

Residues valine 7 to histidine 20, glycine 101, asparagine 163, and arginine 188 contribute to the ATP site.

Belongs to the TmcAL family.

The protein resides in the cytoplasm. The catalysed reaction is cytidine(34) in elongator tRNA(Met) + acetate + ATP = N(4)-acetylcytidine(34) in elongator tRNA(Met) + AMP + diphosphate. Its function is as follows. Catalyzes the formation of N(4)-acetylcytidine (ac(4)C) at the wobble position of elongator tRNA(Met), using acetate and ATP as substrates. First activates an acetate ion to form acetyladenylate (Ac-AMP) and then transfers the acetyl group to tRNA to form ac(4)C34. The polypeptide is tRNA(Met) cytidine acetate ligase (Bacillus licheniformis (strain ATCC 14580 / DSM 13 / JCM 2505 / CCUG 7422 / NBRC 12200 / NCIMB 9375 / NCTC 10341 / NRRL NRS-1264 / Gibson 46)).